A 397-amino-acid chain; its full sequence is MQGISVTGLVKRGWMVRSVFDTIDGIDQLGEQLASVTVTLDKLAAIQPQLVALLPDEIASQQINRELALANYATMSGIYAQTAALIENAAAMGQAFDAAKNDDSFYLPPEAFDNPDFQRGLKLFLSADGKAARMIISHEGDPATPEGISHIDAIKQAAHEAVKGTPMAGAGIYLAGTAATFKDIQDGATYDLLIAGIAALSLILLIMMIITRSLVAALVIVGTVALSLGASFGLSVLVWQHLLGIQLYWIVLALAVILLLAVGSDYNLLLISRFKEEIGAGLNTGIIRAMAGTGGVVTAAGLVFAATMSSFVFSDLRVLGQIGTTIGLGLLFDTLVVRAFMTPSIAVLLGRWFWWPQRVRPRPASRMLRPYGPRPVVRELLLREGNDDPRTQVATHR.

A run of 5 helical transmembrane segments spans residues 190 to 210, 214 to 234, 242 to 262, 293 to 313, and 328 to 348; these read YDLLIAGIAALSLILLIMMII, LVAALVIVGTVALSLGASFGL, LLGIQLYWIVLALAVILLLAV, TGGVVTAAGLVFAATMSSFVF, and LGLLFDTLVVRAFMTPSIAVL.

It belongs to the resistance-nodulation-cell division (RND) (TC 2.A.6) family. MmpL subfamily.

Its subcellular location is the cell membrane. In Mycobacterium tuberculosis (strain CDC 1551 / Oshkosh), this protein is Probable transport protein MmpL6 (mmpL6).